The chain runs to 202 residues: NAD(P)H dehydrogenase (quinone) (202 aa).

The Flavodoxin-like domain maps to 7-193; it reads VLVLYYSMYG…TIARFQGRHF (187 aa). Residues 13-18 and 82-84 contribute to the FMN site; these read SMYGHI and TRF. Residue Y15 coordinates NAD(+). Position 102 (W102) interacts with substrate. FMN contacts are provided by residues 117–122 and H137; that span reads STATGG.

This sequence belongs to the WrbA family. FMN is required as a cofactor.

The catalysed reaction is a quinone + NADH + H(+) = a quinol + NAD(+). It carries out the reaction a quinone + NADPH + H(+) = a quinol + NADP(+). This Rhodospirillum rubrum (strain ATCC 11170 / ATH 1.1.1 / DSM 467 / LMG 4362 / NCIMB 8255 / S1) protein is NAD(P)H dehydrogenase (quinone).